The following is a 417-amino-acid chain: Tyrosine--tRNA ligase (417 aa).

Tyrosine 39 serves as a coordination point for L-tyrosine. A 'HIGH' region motif is present at residues 44-53 (CTAPSLHVGH). The L-tyrosine site is built by tyrosine 176 and glutamine 180. Positions 236-240 (KMGKT) match the 'KMSKS' region motif. Lysine 239 contributes to the ATP binding site. Residues 350–417 (AGVLALFVKA…KKRHVLLRPA (68 aa)) form the S4 RNA-binding domain.

It belongs to the class-I aminoacyl-tRNA synthetase family. TyrS type 1 subfamily. Homodimer.

The protein resides in the cytoplasm. The enzyme catalyses tRNA(Tyr) + L-tyrosine + ATP = L-tyrosyl-tRNA(Tyr) + AMP + diphosphate + H(+). In terms of biological role, catalyzes the attachment of tyrosine to tRNA(Tyr) in a two-step reaction: tyrosine is first activated by ATP to form Tyr-AMP and then transferred to the acceptor end of tRNA(Tyr). This is Tyrosine--tRNA ligase from Nitrobacter winogradskyi (strain ATCC 25391 / DSM 10237 / CIP 104748 / NCIMB 11846 / Nb-255).